Reading from the N-terminus, the 70-residue chain is Probable rubredoxin HupI (70 aa).

Positions 15 to 66 (DDRMECGICWHVYDPAEGDPVWQIPPGTPFSNLTEDWRCPNCDALQSKFMRL) constitute a Rubredoxin-like domain. Fe cation contacts are provided by Cys20, Cys23, Cys53, and Cys56.

It belongs to the rubredoxin family. Fe(3+) serves as cofactor.

Functionally, could be an electron transport intermediate in hydrogen oxidation. The polypeptide is Probable rubredoxin HupI (hupI) (Rhizobium leguminosarum bv. viciae).